The chain runs to 584 residues: 2-succinyl-5-enolpyruvyl-6-hydroxy-3-cyclohexene-1-carboxylate synthase (584 aa).

This sequence belongs to the TPP enzyme family. MenD subfamily. As to quaternary structure, homodimer. Mg(2+) is required as a cofactor. The cofactor is Mn(2+). It depends on thiamine diphosphate as a cofactor.

The enzyme catalyses isochorismate + 2-oxoglutarate + H(+) = 5-enolpyruvoyl-6-hydroxy-2-succinyl-cyclohex-3-ene-1-carboxylate + CO2. It functions in the pathway quinol/quinone metabolism; 1,4-dihydroxy-2-naphthoate biosynthesis; 1,4-dihydroxy-2-naphthoate from chorismate: step 2/7. It participates in quinol/quinone metabolism; menaquinone biosynthesis. Catalyzes the thiamine diphosphate-dependent decarboxylation of 2-oxoglutarate and the subsequent addition of the resulting succinic semialdehyde-thiamine pyrophosphate anion to isochorismate to yield 2-succinyl-5-enolpyruvyl-6-hydroxy-3-cyclohexene-1-carboxylate (SEPHCHC). In Bacillus anthracis, this protein is 2-succinyl-5-enolpyruvyl-6-hydroxy-3-cyclohexene-1-carboxylate synthase.